We begin with the raw amino-acid sequence, 148 residues long: MTSFKLVKYIPRIKKKKSGLRKLARKVPTDRLLKFERVFKAQKRIPMSVFKAQRVLDEIRWRYYEETVMILNLMPYRASYPILKLVYSAAANATHYRDFDKANLFITKAEVSRSTIMKKFRPRARGRSFPIKKSMCHITIVLNIVKKS.

This sequence belongs to the universal ribosomal protein uL22 family. Part of the 50S ribosomal subunit.

Its subcellular location is the plastid. The protein localises to the chloroplast. In terms of biological role, this protein binds specifically to 23S rRNA. The globular domain of the protein is located near the polypeptide exit tunnel on the outside of the subunit, while an extended beta-hairpin is found that lines the wall of the exit tunnel in the center of the 70S ribosome. This chain is Large ribosomal subunit protein uL22c (rpl22), found in Triticum aestivum (Wheat).